Here is a 2228-residue protein sequence, read N- to C-terminus: Genome polyprotein (2228 aa).

Residues 55–76 (TAEVGSHQPEPLKTSVDKPGSK) form a disordered region. Short sequence motifs ((L)YPX(n)L motif) lie at residues 167–171 (YPHGL) and 200–205 (YPVWEL). An involved in P1-2A pentamerization region spans residues 766–836 (MMDRIALGDL…PRKIKGVFSQ (71 aa)). The helical transmembrane segment at 1011-1031 (TVEIINTVLCFVKSGILLYVI) threads the bilayer. The membrane-penetrating ability stretch occupies residues 1043-1070 (IGLLRVMNYADIGCSVISCGKVFSKMLE). A coiled-coil region spans residues 1127 to 1153 (NKKDVLNILKDHQQKIERAIEEADNFC). The SF3 helicase domain maps to 1204 to 1366 (HQKLKNLGSI…SFFKNPHNDM (163 aa)). Residue 1230–1237 (GKRGGGKS) participates in ATP binding. The chain crosses the membrane as a helical span at residues 1462-1482 (WVAVGAAVGVLGVLVGGWYVY). Position 1499 is an O-(5'-phospho-RNA)-tyrosine (tyrosine 1499). One can recognise a Peptidase C3 domain in the interval 1514–1728 (DPVESQSTLE…VAKLVTQEMF (215 aa)). Residues histidine 1563, aspartate 1603, and cysteine 1691 each act as for protease 3C activity in the active site. One can recognise a RdRp catalytic domain in the interval 1977–2098 (DVGLDLDFSA…VFSRQVQIDN (122 aa)).

Belongs to the picornaviridae polyprotein family. In terms of assembly, homodimer. Homomultimer; probably interacts with membranes in a multimeric form. Seems to assemble into amyloid-like fibers. As to quaternary structure, homodimer. Monomer. Interacts with protein 3CD. Interacts with host ACBD3. In terms of assembly, interacts with protein 3AB. As to quaternary structure, interacts with human MAVS. Homodimer; disulfide-linked. In terms of assembly, homopentamer. Homooligomer. As to quaternary structure, interacts with capsid protein VP2. Interacts with capsid protein VP3. Interacts with capsid protein VP1. Interacts with capsid protein VP3. In terms of assembly, interacts with capsid protein VP1. Interacts with capsid protein VP2. Specific enzymatic cleavages by viral protease in vivo yield a variety of precursors and mature proteins. Polyprotein processing intermediates are produced, such as P1-2A which is a functional precursor of the structural proteins, VP0 which is a VP4-VP2 precursor, VP1-2A precursor, 3ABC precursor which is a stable and catalytically active precursor of 3A, 3B and 3C proteins, 3AB and 3CD precursors. The assembly signal 2A is removed from VP1-2A by a host protease, possibly host Cathepsin L. This cleavage occurs over a region of 3 amino-acids probably generating VP1 proteins with heterogeneous C-termini. In terms of processing, during virion maturation, immature virions are rendered infectious following cleavage of VP0 into VP4 and VP2. This maturation seems to be an autocatalytic event triggered by the presence of RNA in the capsid and is followed by a conformational change of the particle. Post-translationally, the assembly signal 2A is removed from VP1-2A by a host protease, possibly host Cathepsin L in naked virions. This cleavage does not occur in enveloped virions. This cleavage occurs over a region of 3 amino-acids probably generating VP1 proteins with heterogeneous C-termini. VPg is uridylylated prior to priming replication into VPg-pUpU. In terms of processing, unlike other picornaviruses, does not seem to be myristoylated.

The protein resides in the virion. Its subcellular location is the host endosome. It is found in the host multivesicular body. The protein localises to the host membrane. It localises to the host mitochondrion outer membrane. The protein resides in the host cytoplasm. Its subcellular location is the host cytoplasmic vesicle membrane. It catalyses the reaction RNA(n) + a ribonucleoside 5'-triphosphate = RNA(n+1) + diphosphate. The enzyme catalyses a ribonucleoside 5'-triphosphate + H2O = a ribonucleoside 5'-diphosphate + phosphate + H(+). The catalysed reaction is Selective cleavage of Gln-|-Gly bond in the poliovirus polyprotein. In other picornavirus reactions Glu may be substituted for Gln, and Ser or Thr for Gly.. In terms of biological role, capsid proteins VP1, VP2, and VP3 form a closed capsid enclosing the viral positive strand RNA genome. All these proteins contain a beta-sheet structure called beta-barrel jelly roll. Together they form an icosahedral capsid (T=3) composed of 60 copies of each VP1, VP2, and VP3, with a diameter of approximately 300 Angstroms. VP1 is situated at the 12 fivefold axes, whereas VP2 and VP3 are located at the quasi-sixfold axes. The naked capsid interacts with the host receptor HAVCR1 to provide virion attachment to and probably entry into the target cell. Its function is as follows. VP0 precursor is a component of the immature procapsids. Plays a role in the assembly of the 12 pentamers into an icosahedral structure. Has not been detected in mature virions, supposedly owing to its small size. Functionally, precursor component of immature procapsids that corresponds to an extended form of the structural protein VP1. After maturation, possibly by the host Cathepsin L, the assembly signal 2A is cleaved to give rise to the mature VP1 protein. In terms of biological role, functions as a viroporin. Affects membrane integrity and causes an increase in membrane permeability. Involved in host intracellular membrane rearrangements probably to give rise to the viral factories. Does not disrupt calcium homeostasis or glycoprotein trafficking. Antagonizes the innate immune response of the host by suppressing IFN-beta synthesis, which it achieves by interfering with the RIG-I/IFIH1 pathway. Its function is as follows. Affects membrane integrity and causes an increase in membrane permeability. Associates with and induces structural rearrangements of intracellular membranes. Displays RNA-binding activity. Functionally, the precursor 3ABC is targeted to the mitochondrial membrane where protease 3C activity cleaves and inhibits the host antiviral protein MAVS, thereby disrupting activation of IRF3 through the IFIH1/MDA5 pathway. In vivo, the protease activity of 3ABC precursor is more efficient in cleaving the 2BC precursor than that of protein 3C. The 3ABC precursor may therefore play a role in the proteolytic processing of the polyprotein. Possible viroporin. In terms of biological role, interacts with the 3CD precursor and with RNA structures found at both the 5'- and 3'-termini of the viral genome. Since the 3AB precursor contains the hydrophobic domain 3A, it probably anchors the whole viral replicase complex to intracellular membranes on which viral RNA synthesis occurs. Its function is as follows. May serve as membrane anchor to the 3AB and 3ABC precursors via its hydrophobic domain. May interact with RNA. Acts as a primer for viral RNA replication and remains covalently bound to viral genomic RNA. VPg is uridylylated prior to priming replication into VPg-pUpU. The VPg-pUpU is then used as primer on the genomic RNA poly(A) by the RNA-dependent RNA polymerase to replicate the viral genome. Functionally, cysteine protease that generates mature viral proteins from the precursor polyprotein. In addition to its proteolytic activity, it binds to viral RNA, and thus influences viral genome replication. RNA and substrate bind cooperatively to the protease. Cleaves IKBKG/NEMO to impair innate immune signaling. Cleaves host PABPC1 which may participate in the switch of viral translation to RNA synthesis. In terms of biological role, interacts with the 3AB precursor and with RNA structures found at both the 5'- and 3'-termini of the viral genome. Disrupts TLR3 signaling by degrading the host adapter protein TICAM1/TRIF. Its function is as follows. RNA-directed RNA polymerase 3D-POL replicates genomic and antigenomic RNA by recognizing replications specific signals. In Human hepatitis A virus genotype IIIA (isolate NOR-21) (HHAV), this protein is Genome polyprotein.